The chain runs to 177 residues: Secretion monitor (177 aa).

An N-terminal signal peptide occupies residues 1–30 (MIGILNRWRQFGRRYFWPHLLLGMVAASLG).

It belongs to the SecM family.

It localises to the cytoplasm. The protein localises to the cytosol. It is found in the periplasm. Functionally, regulates secA expression by translational coupling of the secM secA operon. Translational pausing at a specific Pro residue 5 residues before the end of the protein may allow disruption of a mRNA repressor helix that normally suppresses secA translation initiation. The chain is Secretion monitor from Yersinia enterocolitica serotype O:8 / biotype 1B (strain NCTC 13174 / 8081).